The chain runs to 471 residues: Threonine--tRNA ligase catalytic subunit (471 aa).

The interval 8–333 (THIDYAYELD…YLEHRRGRMP (326 aa)) is catalytic. Residues cysteine 112, histidine 166, and histidine 310 each contribute to the Zn(2+) site.

This sequence belongs to the class-II aminoacyl-tRNA synthetase family. In terms of assembly, homodimer. Probably interacts with its editing subunit. It depends on Zn(2+) as a cofactor.

Its subcellular location is the cytoplasm. The enzyme catalyses tRNA(Thr) + L-threonine + ATP = L-threonyl-tRNA(Thr) + AMP + diphosphate + H(+). In terms of biological role, catalyzes the attachment of threonine to tRNA(Thr) in a two-step reaction: L-threonine is first activated by ATP to form Thr-AMP and then transferred to the acceptor end of tRNA(Thr). This protein is probably not able to deacylate mischarged L-seryl-tRNA(Thr) as it lacks the appropriate domain. The polypeptide is Threonine--tRNA ligase catalytic subunit (Aeropyrum pernix (strain ATCC 700893 / DSM 11879 / JCM 9820 / NBRC 100138 / K1)).